The following is a 390-amino-acid chain: Putative F-box protein At3g52320 (390 aa).

One can recognise an F-box domain in the interval 21-71; that stretch reads VVFLPEIPEEMLIDILIRLPAKSLMRFKCVSKLWLSLITSRYFTNRFFKPS.

The sequence is that of Putative F-box protein At3g52320 from Arabidopsis thaliana (Mouse-ear cress).